The following is a 201-amino-acid chain: Molybdenum cofactor guanylyltransferase (201 aa).

GTP is bound by residues 14 to 16, Lys31, and Asp104; that span reads LAG. Asp104 lines the Mg(2+) pocket.

It belongs to the MobA family. Monomer. It depends on Mg(2+) as a cofactor.

It is found in the cytoplasm. The catalysed reaction is Mo-molybdopterin + GTP + H(+) = Mo-molybdopterin guanine dinucleotide + diphosphate. Its function is as follows. Transfers a GMP moiety from GTP to Mo-molybdopterin (Mo-MPT) cofactor (Moco or molybdenum cofactor) to form Mo-molybdopterin guanine dinucleotide (Mo-MGD) cofactor. This chain is Molybdenum cofactor guanylyltransferase, found in Helicobacter pylori (strain P12).